The sequence spans 521 residues: Cytochrome P450 1A1 (521 aa).

Residue Phe229 coordinates substrate. Residue Cys463 coordinates heme.

The protein belongs to the cytochrome P450 family. Requires heme as cofactor.

The protein resides in the endoplasmic reticulum membrane. It localises to the microsome membrane. It catalyses the reaction an organic molecule + reduced [NADPH--hemoprotein reductase] + O2 = an alcohol + oxidized [NADPH--hemoprotein reductase] + H2O + H(+). In terms of biological role, cytochromes P450 are a group of heme-thiolate monooxygenases. They oxidize a variety of structurally unrelated compounds, including steroids, fatty acids, and xenobiotics. In Chelon auratus (Golden grey mullet), this protein is Cytochrome P450 1A1 (cyp1a1).